A 192-amino-acid chain; its full sequence is Photosystem I assembly protein Ycf4 (192 aa).

2 consecutive transmembrane segments (helical) span residues Tyr-30 to Leu-52 and Ile-72 to Trp-94.

Belongs to the Ycf4 family.

It localises to the cellular thylakoid membrane. In terms of biological role, seems to be required for the assembly of the photosystem I complex. This is Photosystem I assembly protein Ycf4 from Thermosynechococcus vestitus (strain NIES-2133 / IAM M-273 / BP-1).